The following is a 263-amino-acid chain: Putative hydro-lyase BPUM_0381 (263 aa).

Belongs to the D-glutamate cyclase family.

This chain is Putative hydro-lyase BPUM_0381, found in Bacillus pumilus (strain SAFR-032).